An 803-amino-acid chain; its full sequence is Ubiquitin carboxyl-terminal hydrolase 45 (803 aa).

The disordered stretch occupies residues 1-34 (MRLKDPFSLKTADMTKRSNKPKKPRDEDSSDEVG). Residues 36-153 (LTCQHVSRAV…QTLDFLQKQS (118 aa)) form a UBP-type zinc finger. Zn(2+) contacts are provided by cysteine 38, histidine 40, cysteine 62, cysteine 65, cysteine 85, cysteine 88, cysteine 93, histidine 100, histidine 104, histidine 113, cysteine 126, and cysteine 129. A USP domain is found at 192 to 802 (KGINNLGNTC…QAYLLFYEEL (611 aa)). Cysteine 201 acts as the Nucleophile in catalysis. The segment at 394 to 554 (PTNPARLGKS…LPSIRPQQGG (161 aa)) is disordered. Over residues 403–417 (SGREQDSLTSHDDSL) the composition is skewed to basic and acidic residues. 2 stretches are compositionally biased toward polar residues: residues 419 to 440 (AHSQANRNSRRLSGQKLQSRHS) and 469 to 480 (SYRTDTMGSQSD). The span at 502–531 (SEWSPRIPSVSSHSSTSDKTSITTTLSTTT) shows a compositional bias: low complexity. Residues 532-545 (HNPSLKSNPSSTPL) are compositionally biased toward polar residues. Histidine 739 (proton acceptor) is an active-site residue.

This sequence belongs to the peptidase C19 family. Retina.

The protein resides in the photoreceptor inner segment. It localises to the cytoplasm. It is found in the nucleus. The catalysed reaction is Thiol-dependent hydrolysis of ester, thioester, amide, peptide and isopeptide bonds formed by the C-terminal Gly of ubiquitin (a 76-residue protein attached to proteins as an intracellular targeting signal).. Functionally, catalyzes the deubiquitination of SPDL1. Plays a role in the repair of UV-induced DNA damage via deubiquitination of ERCC1, promoting its recruitment to DNA damage sites. May be involved in the maintenance of photoreceptor function. May play a role in normal retinal development. The polypeptide is Ubiquitin carboxyl-terminal hydrolase 45 (Danio rerio (Zebrafish)).